Consider the following 149-residue polypeptide: Ribonuclease H (149 aa).

The RNase H type-1 domain occupies 5 to 146 (QRPHVVIFTD…ADELAREGLA (142 aa)). The Mg(2+) site is built by Asp14, Glu52, Asp74, and Asp138.

Belongs to the RNase H family. In terms of assembly, monomer. The cofactor is Mg(2+).

The protein resides in the cytoplasm. It carries out the reaction Endonucleolytic cleavage to 5'-phosphomonoester.. In terms of biological role, endonuclease that specifically degrades the RNA of RNA-DNA hybrids. The polypeptide is Ribonuclease H (Afipia carboxidovorans (strain ATCC 49405 / DSM 1227 / KCTC 32145 / OM5) (Oligotropha carboxidovorans)).